The primary structure comprises 589 residues: Transmembrane 9 superfamily member 5 (589 aa).

The first 24 residues, 1-24, serve as a signal peptide directing secretion; the sequence is MAQFLLTVLQVLLALTFWIGIGSG. Residues 25 to 227 lie on the Lumenal side of the membrane; the sequence is SSNHYNAGDH…SFHPISQKIH (203 aa). The helical transmembrane segment at 228–248 threads the bilayer; the sequence is FFSFLNSITVVVLLIGLISFL. Over 249–291 the chain is Cytoplasmic; that stretch reads FMRHLKNELRSYSIGDEEERKEAGWKLVHSDVFRCPRNISWLC. A helical transmembrane segment spans residues 292 to 312; that stretch reads AILGTGTQLLILIIALFALAF. The Lumenal portion of the chain corresponds to 313–321; sequence TGFLYPYNR. A helical transmembrane segment spans residues 322–342; that stretch reads GMLLTSLVIMYTLTSIVAGYT. Over 343-361 the chain is Cytoplasmic; it reads STSFHSQFEGNKQKRSVRL. A helical membrane pass occupies residues 362–382; that stretch reads AGILYPVPFFIILSVLNTVAI. Residues 383–394 are Lumenal-facing; the sequence is TYGATAALPFGT. The helical transmembrane segment at 395-415 threads the bilayer; the sequence is IVIIILIFTLLNIPFLMLGGV. Over 416–450 the chain is Cytoplasmic; that stretch reads LGNRFGLLEFQPPSAVKRNPREIPPQNWYRRKLYQ. The chain crosses the membrane as a helical span at residues 451-471; the sequence is VFLGGFVPFSAVVLEWHQLYA. Residues 472–482 are Lumenal-facing; the sequence is SLWGFKIYTSP. A helical membrane pass occupies residues 483 to 503; sequence GIMLFTFIVLIFLSSSVGIIL. The Cytoplasmic portion of the chain corresponds to 504–518; sequence TYIQLSGEDHEWWWR. Residues 519–539 form a helical membrane-spanning segment; that stretch reads SILCGGFTAVFMYGYGVLFYL. The Lumenal segment spans residues 540–550; it reads RSDMTGFLQLS. A helical transmembrane segment spans residues 551–571; sequence FYLGYTALLCYALFLVLGTIS. Topologically, residues 572-589 are cytoplasmic; that stretch reads FLASLMFIRHIYRSVKLE. The short motif at 578–583 is the Endoplasmic reticulum export signal element; the sequence is FIRHIY. The short motif at 587–589 is the Golgi retention signal element; it reads KLE.

It belongs to the nonaspanin (TM9SF) (TC 9.A.2) family. Expressed in the root cap and in giant cells.

It is found in the endosome membrane. The protein localises to the golgi apparatus membrane. The protein is Transmembrane 9 superfamily member 5 of Arabidopsis thaliana (Mouse-ear cress).